A 109-amino-acid chain; its full sequence is Cysteine-rich venom protein 7 (109 aa).

A signal peptide spans 1–21 (MSKVFVIILVALMVAISIASA). 5 disulfide bridges follow: Cys30/Cys47, Cys37/Cys52, Cys46/Cys58, Cys70/Cys90, and Cys78/Cys98.

As to expression, expressed by the venom gland.

It localises to the secreted. This chain is Cysteine-rich venom protein 7, found in Pimpla hypochondriaca (Parasitoid wasp).